A 419-amino-acid chain; its full sequence is Endochitinase 2 (419 aa).

An N-terminal signal peptide occupies residues 1–18 (MHHLRALVGVGLAGLAAG). Residues 35–343 (AQNVVYWGQN…QQAKSILVNG (309 aa)) form the GH18 domain. The N-linked (GlcNAc...) asparagine glycan is linked to asparagine 153. Glutamate 173 (proton donor) is an active-site residue. Residues asparagine 237 and asparagine 256 are each glycosylated (N-linked (GlcNAc...) asparagine). Residues 350 to 381 (GPPSSTPATAPAPTATTMPSSTSVSSPAASPT) are compositionally biased toward low complexity. The disordered stretch occupies residues 350–386 (GPPSSTPATAPAPTATTMPSSTSVSSPAASPTGGTVP). The CBM1 domain occupies 383–419 (GTVPQWGQCGGEGYSGPTQCVAPYQCVKQGDWWSSCR).

The protein belongs to the glycosyl hydrolase 18 family. Chitinase class III subfamily.

The protein resides in the secreted. The enzyme catalyses Random endo-hydrolysis of N-acetyl-beta-D-glucosaminide (1-&gt;4)-beta-linkages in chitin and chitodextrins.. Functionally, secreted chitinase involved in the degradation of chitin, a component of the cell walls of fungi and exoskeletal elements of some animals (including worms and arthropods). Participates in the infection process and directly acts in the penetration process of the host cuticle. In Metarhizium robertsii (strain ARSEF 23 / ATCC MYA-3075) (Metarhizium anisopliae (strain ARSEF 23)), this protein is Endochitinase 2 (chi2).